Consider the following 384-residue polypeptide: S-adenosylmethionine synthase (384 aa).

Residue His15 coordinates ATP. Asp17 contributes to the Mg(2+) binding site. Glu43 serves as a coordination point for K(+). Positions 56 and 99 each coordinate L-methionine. The flexible loop stretch occupies residues 99 to 109 (QSPDINQGVDR). ATP is bound by residues 164–166 (DAK), 230–231 (RF), Asp239, 245–246 (RK), Ala262, and Lys266. Asp239 is an L-methionine binding site. Residue Lys270 participates in L-methionine binding.

This sequence belongs to the AdoMet synthase family. In terms of assembly, homotetramer; dimer of dimers. Mg(2+) serves as cofactor. Requires K(+) as cofactor.

It localises to the cytoplasm. It carries out the reaction L-methionine + ATP + H2O = S-adenosyl-L-methionine + phosphate + diphosphate. It participates in amino-acid biosynthesis; S-adenosyl-L-methionine biosynthesis; S-adenosyl-L-methionine from L-methionine: step 1/1. Functionally, catalyzes the formation of S-adenosylmethionine (AdoMet) from methionine and ATP. The overall synthetic reaction is composed of two sequential steps, AdoMet formation and the subsequent tripolyphosphate hydrolysis which occurs prior to release of AdoMet from the enzyme. This Klebsiella pneumoniae (strain 342) protein is S-adenosylmethionine synthase.